We begin with the raw amino-acid sequence, 413 residues long: Multifunctional CCA protein (413 aa).

Glycine 8 and arginine 11 together coordinate ATP. 2 residues coordinate CTP: glycine 8 and arginine 11. Mg(2+)-binding residues include aspartate 21 and aspartate 23. Arginine 91, arginine 137, and arginine 140 together coordinate ATP. CTP is bound by residues arginine 91, arginine 137, and arginine 140. One can recognise an HD domain in the interval 228–329 (TGLHTLMTVT…VKLFDSIDAW (102 aa)).

Belongs to the tRNA nucleotidyltransferase/poly(A) polymerase family. Bacterial CCA-adding enzyme type 1 subfamily. As to quaternary structure, monomer. Can also form homodimers and oligomers. Requires Mg(2+) as cofactor. Ni(2+) is required as a cofactor.

The catalysed reaction is a tRNA precursor + 2 CTP + ATP = a tRNA with a 3' CCA end + 3 diphosphate. It catalyses the reaction a tRNA with a 3' CCA end + 2 CTP + ATP = a tRNA with a 3' CCACCA end + 3 diphosphate. In terms of biological role, catalyzes the addition and repair of the essential 3'-terminal CCA sequence in tRNAs without using a nucleic acid template. Adds these three nucleotides in the order of C, C, and A to the tRNA nucleotide-73, using CTP and ATP as substrates and producing inorganic pyrophosphate. tRNA 3'-terminal CCA addition is required both for tRNA processing and repair. Also involved in tRNA surveillance by mediating tandem CCA addition to generate a CCACCA at the 3' terminus of unstable tRNAs. While stable tRNAs receive only 3'-terminal CCA, unstable tRNAs are marked with CCACCA and rapidly degraded. The protein is Multifunctional CCA protein of Klebsiella pneumoniae (strain 342).